The chain runs to 546 residues: Chaperonin GroEL (546 aa).

ATP contacts are provided by residues 30–33 (TLGP), K51, 87–91 (DGTTT), G415, and D497. The disordered stretch occupies residues 527 to 546 (PKKDSPAPAMPGGGMGGMDF). Residues 537–546 (PGGGMGGMDF) show a composition bias toward gly residues.

It belongs to the chaperonin (HSP60) family. As to quaternary structure, forms a cylinder of 14 subunits composed of two heptameric rings stacked back-to-back. Interacts with the co-chaperonin GroES.

Its subcellular location is the cytoplasm. It carries out the reaction ATP + H2O + a folded polypeptide = ADP + phosphate + an unfolded polypeptide.. In terms of biological role, together with its co-chaperonin GroES, plays an essential role in assisting protein folding. The GroEL-GroES system forms a nano-cage that allows encapsulation of the non-native substrate proteins and provides a physical environment optimized to promote and accelerate protein folding. In Methylorubrum populi (strain ATCC BAA-705 / NCIMB 13946 / BJ001) (Methylobacterium populi), this protein is Chaperonin GroEL.